A 783-amino-acid chain; its full sequence is Probable phosphoketolase (783 aa).

Belongs to the XFP family. Requires thiamine diphosphate as cofactor.

In Rhodopseudomonas palustris (strain TIE-1), this protein is Probable phosphoketolase.